The primary structure comprises 92 residues: Small ribosomal subunit protein bS20 (92 aa).

The tract at residues 1–23 (MANTPSAKKRAKQAEKRRSHNAS) is disordered. Residues 7–20 (AKKRAKQAEKRRSH) are compositionally biased toward basic residues.

This sequence belongs to the bacterial ribosomal protein bS20 family.

Its function is as follows. Binds directly to 16S ribosomal RNA. This Pseudomonas entomophila (strain L48) protein is Small ribosomal subunit protein bS20.